Consider the following 513-residue polypeptide: MHLPSLSLSLTALAIASPSAAYPHFGSSQPVLHSSSDTTQSRADAIKAAFSHAWDGYLQYAFPHDELHPVSNGYGDSRNGWGASAVDALSTAVIMRNATIVNQILDHVGKIDYSKTNTTVSLFETTIRYLGGMLSGYDLLKGPVSDLVQNSSKIDVLLTQSKNLADVLKFAFDTPSGVPYNNLNITSGGNDGAKTNGLAVTGTLALEWTRLSDLTGDTTYADLSQKAESYLLNPQPKSAEPFPGLVGSNINISNGQFTDAQVSWNGGDDSYYEYLIKMYVYDPKRFGLYKDRWVAAAQSTMQHLASHPSSRPDLTFLASYNNGTLGLSSQHLTCFDGGSFLLGGTVLNRTDFINFGLDLVSGCHDTYNSTLTGIGPESFSWDTSDIPSSQQSLYEKAGFYITSGAYILRPEVIESFYYAWRVTGQETYRDWIWSAFSAVNDYCRTSSGFSGLTDVNAANGGSRYDNQESFLFAEVMKYSYMAFAEDAAWQVQPGSGNQFVFNTEAHPVRVSST.

The first 21 residues, 1-21, serve as a signal peptide directing secretion; the sequence is MHLPSLSLSLTALAIASPSAA. Asn-97, Asn-117, Asn-150, Asn-184, Asn-251, Asn-322, Asn-348, and Asn-368 each carry an N-linked (GlcNAc...) asparagine glycan. A disulfide bridge connects residues Cys-334 and Cys-363. Residue Glu-377 is the Proton donor of the active site. A Ca(2+)-binding site is contributed by Thr-503.

It belongs to the glycosyl hydrolase 47 family. As to quaternary structure, monomer. The cofactor is Ca(2+). It depends on Mg(2+) as a cofactor.

The protein resides in the cytoplasmic vesicle lumen. It catalyses the reaction N(4)-(alpha-D-Man-(1-&gt;2)-alpha-D-Man-(1-&gt;2)-alpha-D-Man-(1-&gt;3)-[alpha-D-Man-(1-&gt;2)-alpha-D-Man-(1-&gt;3)-[alpha-D-Man-(1-&gt;2)-alpha-D-Man-(1-&gt;6)]-alpha-D-Man-(1-&gt;6)]-beta-D-Man-(1-&gt;4)-beta-D-GlcNAc-(1-&gt;4)-beta-D-GlcNAc)-L-asparaginyl-[protein] (N-glucan mannose isomer 9A1,2,3B1,2,3) + 4 H2O = N(4)-(alpha-D-Man-(1-&gt;3)-[alpha-D-Man-(1-&gt;3)-[alpha-D-Man-(1-&gt;6)]-alpha-D-Man-(1-&gt;6)]-beta-D-Man-(1-&gt;4)-beta-D-GlcNAc-(1-&gt;4)-beta-D-GlcNAc)-L-asparaginyl-[protein] (N-glucan mannose isomer 5A1,2) + 4 beta-D-mannose. It carries out the reaction N(4)-(alpha-D-Man-(1-&gt;2)-alpha-D-Man-(1-&gt;2)-alpha-D-Man-(1-&gt;3)-[alpha-D-Man-(1-&gt;3)-[alpha-D-Man-(1-&gt;2)-alpha-D-Man-(1-&gt;6)]-alpha-D-Man-(1-&gt;6)]-beta-D-Man-(1-&gt;4)-beta-D-GlcNAc-(1-&gt;4)-beta-D-GlcNAc)-L-asparaginyl-[protein] (N-glucan mannose isomer 8A1,2,3B1,3) + 3 H2O = N(4)-(alpha-D-Man-(1-&gt;3)-[alpha-D-Man-(1-&gt;3)-[alpha-D-Man-(1-&gt;6)]-alpha-D-Man-(1-&gt;6)]-beta-D-Man-(1-&gt;4)-beta-D-GlcNAc-(1-&gt;4)-beta-D-GlcNAc)-L-asparaginyl-[protein] (N-glucan mannose isomer 5A1,2) + 3 beta-D-mannose. It functions in the pathway protein modification; protein glycosylation. Its function is as follows. Involved in the maturation of Asn-linked oligosaccharides. Progressively trims alpha-1,2-linked mannose residues from Man(9)GlcNAc(2) to produce Man(5)GlcNAc(2). The chain is Mannosyl-oligosaccharide alpha-1,2-mannosidase 1B (mns1B) from Aspergillus phoenicis (Aspergillus saitoi).